Here is a 249-residue protein sequence, read N- to C-terminus: U2 small nuclear ribonucleoprotein A' (249 aa).

LRR repeat units follow at residues 20 to 41 (KERE…GATE), 43 to 64 (QFDT…PYLN), 65 to 87 (RLGT…GEFL), and 89 to 110 (KLHS…DPLA). Residues 123-161 (NNITKKANYRLYVIHKLKSLRVLDFIKIKAKERAEAASL) form the LRRCT domain.

Belongs to the U2 small nuclear ribonucleoprotein A family.

The protein resides in the nucleus. Its subcellular location is the nucleus speckle. In terms of biological role, this protein is associated with sn-RNP U2. It helps the A' protein to bind stem loop IV of U2 snRNA. The chain is U2 small nuclear ribonucleoprotein A' from Arabidopsis thaliana (Mouse-ear cress).